The primary structure comprises 215 residues: uncharacterized protein (215 aa).

A helical membrane pass occupies residues 98 to 119; that stretch reads AAALAVAVASLCVCTLLLTHIV.

Its subcellular location is the membrane. This is an uncharacterized protein from Treponema pallidum (strain Nichols).